Consider the following 467-residue polypeptide: UPF0236 protein TTE0610/TTE0881/TTE1053/TTE2432 (467 aa).

This sequence belongs to the UPF0236 family.

The polypeptide is UPF0236 protein TTE0610/TTE0881/TTE1053/TTE2432 (Caldanaerobacter subterraneus subsp. tengcongensis (strain DSM 15242 / JCM 11007 / NBRC 100824 / MB4) (Thermoanaerobacter tengcongensis)).